Reading from the N-terminus, the 304-residue chain is Putative S-adenosyl-L-methionine-dependent methyltransferase MMAR_1057 (304 aa).

S-adenosyl-L-methionine-binding positions include aspartate 130 and 159–160 (DL).

The protein belongs to the UPF0677 family.

In terms of biological role, exhibits S-adenosyl-L-methionine-dependent methyltransferase activity. This Mycobacterium marinum (strain ATCC BAA-535 / M) protein is Putative S-adenosyl-L-methionine-dependent methyltransferase MMAR_1057.